A 95-amino-acid chain; its full sequence is Small ribosomal subunit protein bS20 (95 aa).

It belongs to the bacterial ribosomal protein bS20 family.

Its function is as follows. Binds directly to 16S ribosomal RNA. In Ehrlichia ruminantium (strain Gardel), this protein is Small ribosomal subunit protein bS20.